We begin with the raw amino-acid sequence, 256 residues long: Kallikrein 1-related peptidase-like b4 (256 aa).

Positions 1-17 (MWFLILFLALSLGGIDA) are cleaved as a signal peptide. Residues 18–24 (APPVQSQ) are activation peptide homolog. The region spanning 18–253 (APPVQSQVDC…FSSWIRETMA (236 aa)) is the Peptidase S1 domain. Cysteine 45 and cysteine 61 form a disulfide bridge. Zn(2+) contacts are provided by glutamate 77 and histidine 84. 3 disulfides stabilise this stretch: cysteine 147-cysteine 214, cysteine 179-cysteine 193, and cysteine 204-cysteine 229.

Belongs to the peptidase S1 family. Kallikrein subfamily. 7S nerve growth factor is composed of two alpha chains, a beta dimer composed of identical chains, and two gamma chains. Zn(2+) serves as cofactor. The presence of Gln-24 prevents cleavage of the activation peptide, which remains attached at the amino end of the mature alpha chain.

The polypeptide is Kallikrein 1-related peptidase-like b4 (Klk1b4) (Mus musculus (Mouse)).